We begin with the raw amino-acid sequence, 361 residues long: Peptide chain release factor 1 (361 aa).

Residue Gln-237 is modified to N5-methylglutamine. Residues 283–296 (VEDEKRRSEEESTR) are compositionally biased toward basic and acidic residues. Positions 283 to 305 (VEDEKRRSEEESTRRNLVSSGDR) are disordered.

It belongs to the prokaryotic/mitochondrial release factor family. Methylated by PrmC. Methylation increases the termination efficiency of RF1.

It is found in the cytoplasm. Peptide chain release factor 1 directs the termination of translation in response to the peptide chain termination codons UAG and UAA. This Shewanella woodyi (strain ATCC 51908 / MS32) protein is Peptide chain release factor 1.